The following is a 60-amino-acid chain: UI (60 aa).

Positions alanine 1–glycine 14 are enriched in low complexity. The interval alanine 1–aspartate 22 is disordered. Valine amide is present on valine 60.

It belongs to the sauvagine/corticotropin-releasing factor/urotensin I family.

It is found in the secreted. Urotensin is found in the teleost caudal neurosecretory system. It has a suggested role in osmoregulation and as a corticotropin-releasing factor. The non-hormonal portion of this precursor may be a urotensin binding protein, urophysin. The chain is UI from Platichthys flesus (European flounder).